Consider the following 291-residue polypeptide: Bis(5'-nucleosyl)-tetraphosphatase, symmetrical (291 aa).

Belongs to the Ap4A hydrolase family.

It catalyses the reaction P(1),P(4)-bis(5'-adenosyl) tetraphosphate + H2O = 2 ADP + 2 H(+). Its function is as follows. Hydrolyzes diadenosine 5',5'''-P1,P4-tetraphosphate to yield ADP. This chain is Bis(5'-nucleosyl)-tetraphosphatase, symmetrical, found in Coxiella burnetii (strain Dugway 5J108-111).